Reading from the N-terminus, the 135-residue chain is Probable histone H2A.1 (135 aa).

The protein belongs to the histone H2A family. As to quaternary structure, the nucleosome is a histone octamer containing two molecules each of H2A, H2B, H3 and H4 assembled in one H3-H4 heterotetramer and two H2A-H2B heterodimers. The octamer wraps approximately 147 bp of DNA.

The protein resides in the nucleus. The protein localises to the chromosome. Functionally, core component of nucleosome. Nucleosomes wrap and compact DNA into chromatin, limiting DNA accessibility to the cellular machineries which require DNA as a template. Histones thereby play a central role in transcription regulation, DNA repair, DNA replication and chromosomal stability. DNA accessibility is regulated via a complex set of post-translational modifications of histones, also called histone code, and nucleosome remodeling. The sequence is that of Probable histone H2A.1 from Oryza sativa subsp. japonica (Rice).